The following is a 120-amino-acid chain: Transmembrane protein 010R (120 aa).

A run of 2 helical transmembrane segments spans residues 40–60 and 72–92; these read FCGA…ATAT and SIFF…VWFL.

This sequence belongs to the IIV-6 010R family.

Its subcellular location is the membrane. The chain is Transmembrane protein 010R from Invertebrate iridescent virus 6 (IIV-6).